Here is a 180-residue protein sequence, read N- to C-terminus: Large ribosomal subunit protein uL5 (180 aa).

It belongs to the universal ribosomal protein uL5 family. In terms of assembly, part of the 50S ribosomal subunit; part of the 5S rRNA/L5/L18/L25 subcomplex. Contacts the 5S rRNA and the P site tRNA. Forms a bridge to the 30S subunit in the 70S ribosome.

Its function is as follows. This is one of the proteins that bind and probably mediate the attachment of the 5S RNA into the large ribosomal subunit, where it forms part of the central protuberance. In the 70S ribosome it contacts protein S13 of the 30S subunit (bridge B1b), connecting the 2 subunits; this bridge is implicated in subunit movement. Contacts the P site tRNA; the 5S rRNA and some of its associated proteins might help stabilize positioning of ribosome-bound tRNAs. This Streptococcus uberis (strain ATCC BAA-854 / 0140J) protein is Large ribosomal subunit protein uL5.